Reading from the N-terminus, the 945-residue chain is Netrin receptor UNC5B (945 aa).

The N-terminal stretch at 1–26 (MGARSGARGALLLALLLCWDPRLSQA) is a signal peptide. Residues 27 to 377 (GTDSGSEVLP…LEASGDAALY (351 aa)) lie on the Extracellular side of the membrane. An Ig-like domain is found at 48–145 (PYFLQEPQDA…AGTTKSRRAY (98 aa)). 9 cysteine pairs are disulfide-bonded: Cys69-Cys130, Cys81-Cys128, Cys174-Cys225, Cys258-Cys295, Cys262-Cys299, Cys273-Cys285, Cys314-Cys348, Cys318-Cys353, and Cys326-Cys338. Residues 147-242 (RIAYLRKNFD…KRRSTTATVI (96 aa)) enclose the Ig-like C2-type domain. N-linked (GlcNAc...) asparagine glycosylation is present at Asn222. TSP type-1 domains follow at residues 246–300 (NGGW…TICP) and 302–354 (DGAW…GLCM). Asn347 is a glycosylation site (N-linked (GlcNAc...) asparagine). Residues 378-398 (AGLVVAIFVVVAILMAVGVVV) traverse the membrane as a helical segment. Topologically, residues 399–945 (YRRNCRDFDT…LVAVATDGDC (547 aa)) are cytoplasmic. Cys403 is lipidated: S-palmitoyl cysteine. One can recognise a ZU5 domain in the interval 543–686 (SSVSGTFGCL…LGTYVFTGES (144 aa)). Tyr581 is subject to Phosphotyrosine. The UPA domain stretch occupies residues 689–838 (RSAVKRLQLA…AETPAGSLDT (150 aa)). Residues 707–725 (SLEYSLRVYCLEDTPVALK) are interaction with DCC. One can recognise a Death domain in the interval 865-943 (KICNSLDAPN…EMLVAVATDG (79 aa)).

It belongs to the unc-5 family. As to quaternary structure, interacts with the cytoplasmic part of DCC. Interacts with GNAI2 via its cytoplasmic part. Interacts (via death domain) with DAPK1 (via death domain). Interacts (via extracellular domain) with FLRT3 (via extracellular domain); the interaction is direct. Interacts (via extracellular domain) with FLRT2 and FLRT3 (via extracellular domain), but has higher affinity for FLRT3. Identified in a complex with FLRT3 and ADGRL3; does not interact with ADGRL3 by itself. In terms of processing, phosphorylated on cytoplasmic tyrosine residues. Post-translationally, proteolytically cleaved by caspases during apoptosis. The cleavage does not take place when the receptor is associated with netrin ligand. Its cleavage by caspases is required to induce apoptosis. Palmitoylation is required for pro-apoptotic activity, but not for location at lipid rafts. In terms of tissue distribution, highly expressed in brain. Also expressed at lower level in developing lung, cartilage, kidney and hematopoietic and immune tissues.

The protein localises to the cell membrane. The protein resides in the membrane raft. Its function is as follows. Receptor for netrin required for axon guidance. Mediates axon repulsion of neuronal growth cones in the developing nervous system upon ligand binding. Axon repulsion in growth cones may be caused by its association with DCC that may trigger signaling for repulsion. Functions as a netrin receptor that negatively regulates vascular branching during angiogenesis. Mediates retraction of tip cell filopodia on endothelial growth cones in response to netrin. It also acts as a dependence receptor required for apoptosis induction when not associated with netrin ligand. Mediates apoptosis by activating DAPK1. In the absence of NTN1, activates DAPK1 by reducing its autoinhibitory phosphorylation at Ser-308 thereby increasing its catalytic activity. The protein is Netrin receptor UNC5B (UNC5B) of Homo sapiens (Human).